Here is a 338-residue protein sequence, read N- to C-terminus: Aspartate--ammonia ligase (338 aa).

Belongs to the class-II aminoacyl-tRNA synthetase family. AsnA subfamily.

The protein localises to the cytoplasm. It carries out the reaction L-aspartate + NH4(+) + ATP = L-asparagine + AMP + diphosphate + H(+). The protein operates within amino-acid biosynthesis; L-asparagine biosynthesis; L-asparagine from L-aspartate (ammonia route): step 1/1. The polypeptide is Aspartate--ammonia ligase (Lactobacillus delbrueckii subsp. bulgaricus (strain ATCC 11842 / DSM 20081 / BCRC 10696 / JCM 1002 / NBRC 13953 / NCIMB 11778 / NCTC 12712 / WDCM 00102 / Lb 14)).